The sequence spans 206 residues: MARYLGPKCKLSRREGCDLLLKSGVRDHKSKCKSEKLPGQHGDKKPRLNSYGIQLREKQKIRRLYGILEKQFRNYYKKAARQKGSTGENLMALLERRLDNVVYRMGFASTRAEARQLVAHKAILVNDKVVNVPSFLVNPGDTISVRQKAKNQGRIQAALALSEQRAPCDWITVDTGSFKGTFSTAPTLMDLSSDYNVNLVVELYSK.

Residues 96–161 (RRLDNVVYRM…QGRIQAALAL (66 aa)) enclose the S4 RNA-binding domain.

Belongs to the universal ribosomal protein uS4 family. Part of the 30S ribosomal subunit. Contacts protein S5. The interaction surface between S4 and S5 is involved in control of translational fidelity.

One of the primary rRNA binding proteins, it binds directly to 16S rRNA where it nucleates assembly of the body of the 30S subunit. In terms of biological role, with S5 and S12 plays an important role in translational accuracy. This Legionella pneumophila (strain Paris) protein is Small ribosomal subunit protein uS4.